We begin with the raw amino-acid sequence, 261 residues long: Sepiapterin reductase (261 aa).

Residues 16 to 22 (GASRGFG), 44 to 45 (RT), and 71 to 72 (DL) each bind NADP(+). Residues 158–159 (SL) and Tyr-171 each bind substrate. Residue Lys-175 participates in NADP(+) binding. Residue Gly-200 coordinates substrate. 202–207 (LDTDMH) provides a ligand contact to NADP(+). Residue Asp-258 participates in substrate binding.

Belongs to the sepiapterin reductase family. Homodimer.

Its subcellular location is the cytoplasm. The enzyme catalyses L-erythro-7,8-dihydrobiopterin + NADP(+) = L-sepiapterin + NADPH + H(+). It carries out the reaction (6R)-L-erythro-5,6,7,8-tetrahydrobiopterin + 2 NADP(+) = 6-pyruvoyl-5,6,7,8-tetrahydropterin + 2 NADPH + 2 H(+). Catalyzes the final one or two reductions in tetra-hydrobiopterin biosynthesis to form 5,6,7,8-tetrahydrobiopterin. This is Sepiapterin reductase (spr) from Xenopus tropicalis (Western clawed frog).